The sequence spans 906 residues: Protein translocase subunit SecA (906 aa).

Residues Gln-87, 105–109 (GEGKT), and Asp-521 contribute to the ATP site. Low complexity predominate over residues 849-865 (STATAAEPAPEASQSQS). Positions 849-897 (STATAAEPAPEASQSQSTNDATASQNPPITEVEASKVGRNQPCPCGSGK) are disordered. Polar residues predominate over residues 866 to 876 (TNDATASQNPP). Cys-891, Cys-893, Cys-902, and Cys-903 together coordinate Zn(2+).

The protein belongs to the SecA family. As to quaternary structure, monomer and homodimer. Part of the essential Sec protein translocation apparatus which comprises SecA, SecYEG and auxiliary proteins SecDF-YajC and YidC. Requires Zn(2+) as cofactor.

The protein resides in the cell inner membrane. It is found in the cytoplasm. It catalyses the reaction ATP + H2O + cellular proteinSide 1 = ADP + phosphate + cellular proteinSide 2.. In terms of biological role, part of the Sec protein translocase complex. Interacts with the SecYEG preprotein conducting channel. Has a central role in coupling the hydrolysis of ATP to the transfer of proteins into and across the cell membrane, serving both as a receptor for the preprotein-SecB complex and as an ATP-driven molecular motor driving the stepwise translocation of polypeptide chains across the membrane. The polypeptide is Protein translocase subunit SecA (Dichelobacter nodosus (strain VCS1703A)).